A 180-amino-acid polypeptide reads, in one-letter code: UPF0149 protein XAC3406 (180 aa).

The protein belongs to the UPF0149 family.

The polypeptide is UPF0149 protein XAC3406 (Xanthomonas axonopodis pv. citri (strain 306)).